The sequence spans 167 residues: Protein YfbM (167 aa).

Monomer.

This is Protein YfbM (yfbM) from Escherichia coli (strain K12).